A 389-amino-acid chain; its full sequence is Alanine racemase 1 (389 aa).

Lysine 41 serves as the catalytic Proton acceptor; specific for D-alanine. Lysine 41 bears the N6-(pyridoxal phosphate)lysine mark. Arginine 137 provides a ligand contact to substrate. Tyrosine 266 functions as the Proton acceptor; specific for L-alanine in the catalytic mechanism. Methionine 313 is a substrate binding site.

Belongs to the alanine racemase family. Pyridoxal 5'-phosphate is required as a cofactor.

It catalyses the reaction L-alanine = D-alanine. The protein operates within amino-acid biosynthesis; D-alanine biosynthesis; D-alanine from L-alanine: step 1/1. Functionally, catalyzes the interconversion of L-alanine and D-alanine. May also act on other amino acids. The sequence is that of Alanine racemase 1 (alr1) from Bacillus subtilis (strain 168).